We begin with the raw amino-acid sequence, 218 residues long: Non-structural protein NS3 (218 aa).

The protein belongs to the orbivirus NS3 family.

In terms of biological role, may play a role in the release of virions from infected cells. In Camelus dromedarius (Dromedary), this protein is Non-structural protein NS3 (Segment-10).